We begin with the raw amino-acid sequence, 492 residues long: Catalase isozyme A (492 aa).

The interval 1–23 (MDPCKFRPSSSFDTKTTTTNAGA) is disordered. The span at 8–21 (PSSSFDTKTTTTNA) shows a compositional bias: polar residues. Active-site residues include His-65 and Asn-138. Position 348 (Tyr-348) interacts with heme.

It belongs to the catalase family. In terms of assembly, homotetramer. Heme is required as a cofactor.

Its subcellular location is the peroxisome. The protein resides in the glyoxysome. It carries out the reaction 2 H2O2 = O2 + 2 H2O. Occurs in almost all aerobically respiring organisms and serves to protect cells from the toxic effects of hydrogen peroxide. This Oryza sativa subsp. indica (Rice) protein is Catalase isozyme A.